A 65-amino-acid polypeptide reads, in one-letter code: uncharacterized protein (65 aa).

Positions 1–22 are disordered; the sequence is MEKETPQQETKQSTNKESGFFD. Positions 7 to 17 are enriched in polar residues; it reads QQETKQSTNKE. Positions 22–65 form a coiled coil; it reads DEIIKRTNQLLEKEKELHEKYNKEITSQQDQIDQLKKKINQLKY.

This is an uncharacterized protein from Dictyostelium discoideum (Social amoeba).